Consider the following 322-residue polypeptide: Arginase-1 (322 aa).

The interval methionine 1–glycine 27 is disordered. Serine 7 carries the phosphoserine modification. Residue lysine 17 is modified to N6-succinyllysine. Residue serine 72 is modified to Phosphoserine. An N6-succinyllysine modification is found at lysine 75. Mn(2+)-binding residues include histidine 101, aspartate 124, histidine 126, and aspartate 128. Substrate contacts are provided by residues histidine 126–asparagine 130 and threonine 137–asparagine 139. Position 163 is a phosphoserine (serine 163). Aspartate 183 provides a ligand contact to substrate. The residue at position 217 (serine 217) is a Phosphoserine. Mn(2+) contacts are provided by aspartate 232 and aspartate 234. 2 residues coordinate substrate: threonine 246 and glutamate 277.

It belongs to the arginase family. In terms of assembly, homotrimer. Interacts with CMTM6. Requires Mn(2+) as cofactor.

It localises to the cytoplasm. It catalyses the reaction L-arginine + H2O = urea + L-ornithine. It functions in the pathway nitrogen metabolism; urea cycle; L-ornithine and urea from L-arginine: step 1/1. The chain is Arginase-1 (ARG1) from Sus scrofa (Pig).